The primary structure comprises 256 residues: Pimeloyl-[acyl-carrier protein] methyl ester esterase (256 aa).

One can recognise an AB hydrolase-1 domain in the interval 15 to 242; that stretch reads HLVLLHGWGL…AAHAPFISHP (228 aa). Substrate is bound by residues tryptophan 22, 82–83, and 143–147; these read SL and FLALQ. Serine 82 serves as the catalytic Nucleophile. Residues aspartate 207 and histidine 235 contribute to the active site. Residue histidine 235 coordinates substrate.

This sequence belongs to the AB hydrolase superfamily. Carboxylesterase BioH family. In terms of assembly, monomer.

The protein resides in the cytoplasm. The enzyme catalyses 6-carboxyhexanoyl-[ACP] methyl ester + H2O = 6-carboxyhexanoyl-[ACP] + methanol + H(+). The protein operates within cofactor biosynthesis; biotin biosynthesis. Functionally, the physiological role of BioH is to remove the methyl group introduced by BioC when the pimeloyl moiety is complete. It allows to synthesize pimeloyl-ACP via the fatty acid synthetic pathway through the hydrolysis of the ester bonds of pimeloyl-ACP esters. The protein is Pimeloyl-[acyl-carrier protein] methyl ester esterase of Escherichia coli O6:H1 (strain CFT073 / ATCC 700928 / UPEC).